The primary structure comprises 182 residues: Peptidyl-prolyl cis-trans isomerase C, mitochondrial (182 aa).

The transit peptide at 1–20 directs the protein to the mitochondrion; it reads MFKRSIIQQSRLFSNSASRL. The PPIase cyclophilin-type domain occupies 25-181; that stretch reads FFDPAVNGTK…AEIVIEEAGE (157 aa).

This sequence belongs to the cyclophilin-type PPIase family.

It is found in the mitochondrion matrix. It carries out the reaction [protein]-peptidylproline (omega=180) = [protein]-peptidylproline (omega=0). With respect to regulation, inhibited by the immunosuppressant drug cyclosporin A and by SDZ NIM811, a PPIase inhibitor. In terms of biological role, PPIases accelerate the folding of proteins. It catalyzes the cis-trans isomerization of proline imidic peptide bonds in oligopeptides. This isozyme is required for growth on lactate at high temperature. This is Peptidyl-prolyl cis-trans isomerase C, mitochondrial (CPR3) from Saccharomyces cerevisiae (strain ATCC 204508 / S288c) (Baker's yeast).